Consider the following 61-residue polypeptide: Large ribosomal subunit protein eL37 (61 aa).

C19, C22, C34, and C37 together coordinate Zn(2+). The C4-type zinc-finger motif lies at 19-37; it reads CRRCGRNAYNVSKHYCAAC.

It belongs to the eukaryotic ribosomal protein eL37 family. Zn(2+) serves as cofactor.

Its function is as follows. Binds to the 23S rRNA. This is Large ribosomal subunit protein eL37 from Saccharolobus islandicus (strain Y.N.15.51 / Yellowstone #2) (Sulfolobus islandicus).